The following is a 273-amino-acid chain: Tryptase (273 aa).

An N-terminal signal peptide occupies residues 1–18 (MLKLLLLTLPLLSSLVHA). Residues 19–28 (APSLAMPREG) constitute a propeptide, activation peptide. Positions 29–270 (IVGGQEASGN…YLDWIYRYVP (242 aa)) constitute a Peptidase S1 domain. N-linked (GlcNAc...) asparagine glycosylation is present at Asn49. Cys57 and Cys73 are joined by a disulfide. Catalysis depends on charge relay system residues His72 and Asp119. 3 disulfides stabilise this stretch: Cys153-Cys228, Cys186-Cys209, and Cys218-Cys246. The Charge relay system role is filled by Ser222.

Belongs to the peptidase S1 family. Tryptase subfamily. In terms of assembly, homotetramer. In terms of processing, glycosylated. As to expression, mast cells.

It localises to the secreted. The enzyme catalyses Preferential cleavage: Arg-|-Xaa, Lys-|-Xaa, but with more restricted specificity than trypsin.. Functionally, tryptase is the major neutral protease present in mast cells and is secreted upon the coupled activation-degranulation response of this cell type. May play a role in innate immunity. The protein is Tryptase (Tpsab1) of Rattus norvegicus (Rat).